Consider the following 130-residue polypeptide: Small ribosomal subunit protein uS9 (130 aa).

The interval 109 to 130 (RKKERKKYGQRAARARYQYSKR) is disordered.

Belongs to the universal ribosomal protein uS9 family.

This is Small ribosomal subunit protein uS9 from Nitratidesulfovibrio vulgaris (strain DSM 19637 / Miyazaki F) (Desulfovibrio vulgaris).